The chain runs to 157 residues: 2-C-methyl-D-erythritol 2,4-cyclodiphosphate synthase (157 aa).

The a divalent metal cation site is built by Asp-9 and His-11. Residues 9-11 (DVH) and 35-36 (HS) each bind 4-CDP-2-C-methyl-D-erythritol 2-phosphate. His-43 lines the a divalent metal cation pocket. 4-CDP-2-C-methyl-D-erythritol 2-phosphate is bound by residues 57–59 (DIG), 62–66 (FPDTD), 101–107 (AEKPKMA), 133–136 (TTTE), Phe-140, and Arg-143.

Belongs to the IspF family. Homotrimer. Requires a divalent metal cation as cofactor.

It carries out the reaction 4-CDP-2-C-methyl-D-erythritol 2-phosphate = 2-C-methyl-D-erythritol 2,4-cyclic diphosphate + CMP. It functions in the pathway isoprenoid biosynthesis; isopentenyl diphosphate biosynthesis via DXP pathway; isopentenyl diphosphate from 1-deoxy-D-xylulose 5-phosphate: step 4/6. In terms of biological role, involved in the biosynthesis of isopentenyl diphosphate (IPP) and dimethylallyl diphosphate (DMAPP), two major building blocks of isoprenoid compounds. Catalyzes the conversion of 4-diphosphocytidyl-2-C-methyl-D-erythritol 2-phosphate (CDP-ME2P) to 2-C-methyl-D-erythritol 2,4-cyclodiphosphate (ME-CPP) with a corresponding release of cytidine 5-monophosphate (CMP). This Listeria monocytogenes serotype 4a (strain HCC23) protein is 2-C-methyl-D-erythritol 2,4-cyclodiphosphate synthase.